The chain runs to 337 residues: Glyceraldehyde-3-phosphate dehydrogenase 3 (337 aa).

NAD(+) contacts are provided by residues 12-13 (RM) and K80. D-glyceraldehyde 3-phosphate is bound by residues 152–154 (SCT) and T183. The active-site Nucleophile is the C153. Residue N184 participates in NAD(+) binding. D-glyceraldehyde 3-phosphate contacts are provided by residues R198, 211–212 (TG), and R234. N317 provides a ligand contact to NAD(+).

This sequence belongs to the glyceraldehyde-3-phosphate dehydrogenase family. Homotetramer.

It is found in the cytoplasm. The enzyme catalyses D-glyceraldehyde 3-phosphate + phosphate + NAD(+) = (2R)-3-phospho-glyceroyl phosphate + NADH + H(+). It participates in carbohydrate degradation; glycolysis; pyruvate from D-glyceraldehyde 3-phosphate: step 1/5. The protein operates within carbohydrate biosynthesis; gluconeogenesis. In terms of biological role, catalyzes the oxidative phosphorylation of glyceraldehyde 3-phosphate (G3P) to 1,3-bisphosphoglycerate (BPG) using the cofactor NAD. The first reaction step involves the formation of a hemiacetal intermediate between G3P and a cysteine residue, and this hemiacetal intermediate is then oxidized to a thioester, with concomitant reduction of NAD to NADH. The reduced NADH is then exchanged with the second NAD, and the thioester is attacked by a nucleophilic inorganic phosphate to produce BPG. The polypeptide is Glyceraldehyde-3-phosphate dehydrogenase 3 (gap3) (Nostoc sp. (strain PCC 7120 / SAG 25.82 / UTEX 2576)).